Reading from the N-terminus, the 425-residue chain is G protein-activated inward rectifier potassium channel 2 (425 aa).

Residues 1 to 91 lie on the Cytoplasmic side of the membrane; sequence MTMAKLTESM…ILTTLVDLKW (91 aa). Residues S18 and S25 each carry the phosphoserine modification. A helical membrane pass occupies residues 92–116; that stretch reads RFNLLIFVMVYTVTWLFFGMIWWLI. At 117–140 the chain is on the extracellular side; the sequence is AYIRGDMDHVEDPSWTPCVTNLNG. The segment at residues 141–152 is an intramembrane region (helical; Pore-forming); it reads FVSAFLFSIETE. Residues 153-159 constitute an intramembrane region (pore-forming); the sequence is TTIGYGY. The Selectivity filter signature appears at 154-159; the sequence is TIGYGY. At 160–168 the chain is on the extracellular side; sequence RVITDKCPE. A helical transmembrane segment spans residues 169 to 190; sequence GIILLLIQSVLGSIVNAFMVGC. The Cytoplasmic portion of the chain corresponds to 191 to 425; sequence MFVKISQPKK…VANLENESKV (235 aa). The disordered stretch occupies residues 392–425; sequence NQHAELETEEEEKNPEEQTERNGDVANLENESKV. Positions 422–425 match the PDZ-binding motif; sequence ESKV.

This sequence belongs to the inward rectifier-type potassium channel (TC 1.A.2.1) family. KCNJ6 subfamily. As to quaternary structure, associates with KCNJ3/GIRK1 or KCNJ5/GRIK4 to form a G-protein-activated heteromultimer pore-forming unit. The resulting inward current is much larger. Interacts (via PDZ-binding motif) with SNX27 (via PDZ domain); the interaction is required when endocytosed to prevent degradation in lysosomes and promote recycling to the plasma membrane. As to expression, expressed in insulin-secreting cells and brain.

The protein localises to the membrane. It catalyses the reaction K(+)(in) = K(+)(out). Activated by phosphatidylinositol 4,5 biphosphate (PtdIns(4,5)P2). Its function is as follows. Inward rectifier potassium channels are characterized by a greater tendency to allow potassium to flow into the cell rather than out of it. Their voltage dependence is regulated by the concentration of extracellular potassium; as external potassium is raised, the voltage range of the channel opening shifts to more positive voltages. The inward rectification is mainly due to the blockage of outward current by internal magnesium. This potassium channel may be involved in the regulation of insulin secretion by glucose and/or neurotransmitters acting through G-protein-coupled receptors. This is G protein-activated inward rectifier potassium channel 2 (KCNJ6) from Mesocricetus auratus (Golden hamster).